The following is an 81-amino-acid chain: Small ribosomal subunit protein bS20 (81 aa).

This sequence belongs to the bacterial ribosomal protein bS20 family.

Its function is as follows. Binds directly to 16S ribosomal RNA. The sequence is that of Small ribosomal subunit protein bS20 from Mycoplasma capricolum subsp. capricolum (strain California kid / ATCC 27343 / NCTC 10154).